We begin with the raw amino-acid sequence, 347 residues long: N-acetyl-gamma-glutamyl-phosphate reductase (347 aa).

Residue Cys153 is part of the active site.

The protein belongs to the NAGSA dehydrogenase family. Type 1 subfamily.

The protein resides in the cytoplasm. The catalysed reaction is N-acetyl-L-glutamate 5-semialdehyde + phosphate + NADP(+) = N-acetyl-L-glutamyl 5-phosphate + NADPH + H(+). It participates in amino-acid biosynthesis; L-arginine biosynthesis; N(2)-acetyl-L-ornithine from L-glutamate: step 3/4. In terms of biological role, catalyzes the NADPH-dependent reduction of N-acetyl-5-glutamyl phosphate to yield N-acetyl-L-glutamate 5-semialdehyde. In Mycobacterium avium (strain 104), this protein is N-acetyl-gamma-glutamyl-phosphate reductase.